Reading from the N-terminus, the 223-residue chain is Peptidyl-tRNA hydrolase (223 aa).

Tyr-16 serves as a coordination point for tRNA. His-21 serves as the catalytic Proton acceptor. The tRNA site is built by Phe-67, Asn-69, and Asn-113.

This sequence belongs to the PTH family. In terms of assembly, monomer.

It localises to the cytoplasm. The enzyme catalyses an N-acyl-L-alpha-aminoacyl-tRNA + H2O = an N-acyl-L-amino acid + a tRNA + H(+). Functionally, hydrolyzes ribosome-free peptidyl-tRNAs (with 1 or more amino acids incorporated), which drop off the ribosome during protein synthesis, or as a result of ribosome stalling. In terms of biological role, catalyzes the release of premature peptidyl moieties from peptidyl-tRNA molecules trapped in stalled 50S ribosomal subunits, and thus maintains levels of free tRNAs and 50S ribosomes. In Helicobacter hepaticus (strain ATCC 51449 / 3B1), this protein is Peptidyl-tRNA hydrolase.